The primary structure comprises 639 residues: Lactose permease (639 aa).

The permease stretch occupies residues 1–473; that stretch reads MKDITKQKFS…AEIVIELEKT (473 aa). The next 12 membrane-spanning stretches (helical) occupy residues 20–40, 59–79, 99–119, 124–144, 176–196, 207–227, 264–284, 294–314, 322–342, 347–367, 398–418, and 433–453; these read FALGNLGHAAFYGALSTYFIV, IGLITALVVIIRLAEVIIDPI, VIGAVVSSVLLVVIFTGIFGL, WIAFAIVFTVLFILLDIFYSF, IGWNGLTMIVVPVTTYFTFIA, WFGFSIVVSIVAVLSALAVAF, LAYLMYSLAYVVTNGVLFYFF, FWIAGAIATVIGFSTAPLYPV, KVLFSIGQMAMILSYLFFIFG, MMVTIGLILFNFTFAQLVVVL, ITGAFSNGLVGAIAITAGMTG, and FEIYAFYTPLLFSILALVIFL. The PTS EIIA type-1 domain maps to 505 to 609; that stretch reads NEVDGNTLTG…QDDIIMYFTQ (105 aa). Histidine 557 carries the phosphohistidine; by HPr modification.

It in the N-terminal section; belongs to the sodium:galactoside symporter (TC 2.A.2) family.

The protein resides in the cell membrane. Responsible for transport of beta-galactosides into the cell, with the concomitant uptake of protons (symport system), and also for transport of homologous and heterologous exchange of beta-galactosides. This chain is Lactose permease (lacS), found in Leuconostoc lactis.